The following is a 364-amino-acid chain: Mitogen-activated protein kinase 11 (364 aa).

Positions 24–308 constitute a Protein kinase domain; the sequence is LQGLRPVGSG…AAEALAHAYF (285 aa). ATP-binding positions include 30-38 and lysine 53; that span reads VGSGAYGSV. Residue glutamate 71 participates in nilotinib binding. Catalysis depends on aspartate 150, which acts as the Proton acceptor. Residue threonine 180 is modified to Phosphothreonine; by MAP2K3, MAP2K4 and MAP2K6. The TXY motif lies at 180-182; sequence TGY. Residue tyrosine 182 is modified to Phosphotyrosine; by MAP2K3, MAP2K4 and MAP2K6. Disordered stretches follow at residues 311-331 and 343-364; these read YHDP…EAKE and QEVL…EIEQ. Positions 314–326 are enriched in acidic residues; sequence PEDEPEAEPYDES. Tyrosine 323 is modified (phosphotyrosine; by ZAP70).

This sequence belongs to the protein kinase superfamily. CMGC Ser/Thr protein kinase family. MAP kinase subfamily. Interacts with HDAC3 and DUSP16. The cofactor is Mg(2+). In terms of processing, dually phosphorylated on Thr-180 and Tyr-182 by MAP2K3/MKK3, MAP2K4/MKK4 and MAP2K6/MKK6, which activates the enzyme. In terms of tissue distribution, highest levels in the brain and heart. Also expressed in the placenta, lung, liver, skeletal muscle, kidney and pancreas.

Its subcellular location is the cytoplasm. It localises to the nucleus. It carries out the reaction L-seryl-[protein] + ATP = O-phospho-L-seryl-[protein] + ADP + H(+). The enzyme catalyses L-threonyl-[protein] + ATP = O-phospho-L-threonyl-[protein] + ADP + H(+). Activated by phosphorylation on threonine and tyrosine by MAP2K3/MKK3, MAP2K4/MKK4 and MAP2K6/MKK6. MAP2K3/MKK3 and MAP2K6/MKK6 are both essential for the activation of MAPK11 induced by environmental stress. HDAC3 interacts directly and selectively with MAPK11 to repress ATF2 transcriptional activity, and regulate TNF gene expression in LPS-stimulated cells. Inhibited by SB203580 and pyridinyl-imidazole related compounds. In terms of biological role, serine/threonine kinase which acts as an essential component of the MAP kinase signal transduction pathway. MAPK11 is one of the four p38 MAPKs which play an important role in the cascades of cellular responses evoked by extracellular stimuli such as pro-inflammatory cytokines or physical stress leading to direct activation of transcription factors. Accordingly, p38 MAPKs phosphorylate a broad range of proteins and it has been estimated that they may have approximately 200 to 300 substrates each. MAPK11 functions are mostly redundant with those of MAPK14. Some of the targets are downstream kinases which are activated through phosphorylation and further phosphorylate additional targets. RPS6KA5/MSK1 and RPS6KA4/MSK2 can directly phosphorylate and activate transcription factors such as CREB1, ATF1, the NF-kappa-B isoform RELA/NFKB3, STAT1 and STAT3, but can also phosphorylate histone H3 and the nucleosomal protein HMGN1. RPS6KA5/MSK1 and RPS6KA4/MSK2 play important roles in the rapid induction of immediate-early genes in response to stress or mitogenic stimuli, either by inducing chromatin remodeling or by recruiting the transcription machinery. On the other hand, two other kinase targets, MAPKAPK2/MK2 and MAPKAPK3/MK3, participate in the control of gene expression mostly at the post-transcriptional level, by phosphorylating ZFP36 (tristetraprolin) and ELAVL1, and by regulating EEF2K, which is important for the elongation of mRNA during translation. MKNK1/MNK1 and MKNK2/MNK2, two other kinases activated by p38 MAPKs, regulate protein synthesis by phosphorylating the initiation factor EIF4E2. In the cytoplasm, the p38 MAPK pathway is an important regulator of protein turnover. For example, CFLAR is an inhibitor of TNF-induced apoptosis whose proteasome-mediated degradation is regulated by p38 MAPK phosphorylation. Ectodomain shedding of transmembrane proteins is regulated by p38 MAPKs as well. In response to inflammatory stimuli, p38 MAPKs phosphorylate the membrane-associated metalloprotease ADAM17. Such phosphorylation is required for ADAM17-mediated ectodomain shedding of TGF-alpha family ligands, which results in the activation of EGFR signaling and cell proliferation. Additional examples of p38 MAPK substrates are the FGFR1. FGFR1 can be translocated from the extracellular space into the cytosol and nucleus of target cells, and regulates processes such as rRNA synthesis and cell growth. FGFR1 translocation requires p38 MAPK activation. In the nucleus, many transcription factors are phosphorylated and activated by p38 MAPKs in response to different stimuli. Classical examples include ATF1, ATF2, ATF6, ELK1, PTPRH, DDIT3, TP53/p53 and MEF2C and MEF2A. The p38 MAPKs are emerging as important modulators of gene expression by regulating chromatin modifiers and remodelers. The promoters of several genes involved in the inflammatory response, such as IL6, IL8 and IL12B, display a p38 MAPK-dependent enrichment of histone H3 phosphorylation on 'Ser-10' (H3S10ph) in LPS-stimulated myeloid cells. This phosphorylation enhances the accessibility of the cryptic NF-kappa-B-binding sites marking promoters for increased NF-kappa-B recruitment. Phosphorylates NLRP1 downstream of MAP3K20/ZAK in response to UV-B irradiation and ribosome collisions, promoting activation of the NLRP1 inflammasome and pyroptosis. Phosphorylates methyltransferase DOT1L on 'Ser-834', 'Thr-900', 'Ser-902', 'Thr-984', 'Ser-1001', 'Ser-1009' and 'Ser-1104'. The polypeptide is Mitogen-activated protein kinase 11 (MAPK11) (Homo sapiens (Human)).